The sequence spans 316 residues: Glutamyl-Q tRNA(Asp) synthetase (316 aa).

L-glutamate contacts are provided by residues 13–17 (RFAPS) and Asp-49. Residues 16 to 26 (PSPSGDLHFGS) carry the 'HIGH' region motif. Zn(2+) contacts are provided by Cys-105, Cys-107, Tyr-119, and Cys-123. Residues Tyr-176 and Arg-194 each contribute to the L-glutamate site. The 'KMSKS' region motif lies at 232-236 (KLSKQ). Lys-235 is a binding site for ATP.

It belongs to the class-I aminoacyl-tRNA synthetase family. GluQ subfamily. Zn(2+) serves as cofactor.

Functionally, catalyzes the tRNA-independent activation of glutamate in presence of ATP and the subsequent transfer of glutamate onto a tRNA(Asp). Glutamate is transferred on the 2-amino-5-(4,5-dihydroxy-2-cyclopenten-1-yl) moiety of the queuosine in the wobble position of the QUC anticodon. The polypeptide is Glutamyl-Q tRNA(Asp) synthetase (Photorhabdus laumondii subsp. laumondii (strain DSM 15139 / CIP 105565 / TT01) (Photorhabdus luminescens subsp. laumondii)).